Consider the following 189-residue polypeptide: Molybdenum cofactor guanylyltransferase (189 aa).

GTP is bound by residues 10–12 (LAG), lysine 23, asparagine 51, aspartate 69, and aspartate 99. Aspartate 99 is a Mg(2+) binding site.

It belongs to the MobA family. As to quaternary structure, monomer. It depends on Mg(2+) as a cofactor.

The protein resides in the cytoplasm. The enzyme catalyses Mo-molybdopterin + GTP + H(+) = Mo-molybdopterin guanine dinucleotide + diphosphate. Functionally, transfers a GMP moiety from GTP to Mo-molybdopterin (Mo-MPT) cofactor (Moco or molybdenum cofactor) to form Mo-molybdopterin guanine dinucleotide (Mo-MGD) cofactor. In Pasteurella multocida (strain Pm70), this protein is Molybdenum cofactor guanylyltransferase.